We begin with the raw amino-acid sequence, 410 residues long: Multifunctional CCA protein (410 aa).

ATP contacts are provided by glycine 8 and arginine 11. CTP contacts are provided by glycine 8 and arginine 11. Mg(2+)-binding residues include aspartate 21 and aspartate 23. The ATP site is built by arginine 91, arginine 138, and arginine 141. CTP is bound by residues arginine 91, arginine 138, and arginine 141. Residues 229-347 (TGVHQEMVSD…AQLALVCEAD (119 aa)) form the HD domain.

This sequence belongs to the tRNA nucleotidyltransferase/poly(A) polymerase family. Bacterial CCA-adding enzyme type 1 subfamily. As to quaternary structure, monomer. Can also form homodimers and oligomers. The cofactor is Mg(2+). Ni(2+) is required as a cofactor.

It carries out the reaction a tRNA precursor + 2 CTP + ATP = a tRNA with a 3' CCA end + 3 diphosphate. It catalyses the reaction a tRNA with a 3' CCA end + 2 CTP + ATP = a tRNA with a 3' CCACCA end + 3 diphosphate. Functionally, catalyzes the addition and repair of the essential 3'-terminal CCA sequence in tRNAs without using a nucleic acid template. Adds these three nucleotides in the order of C, C, and A to the tRNA nucleotide-73, using CTP and ATP as substrates and producing inorganic pyrophosphate. tRNA 3'-terminal CCA addition is required both for tRNA processing and repair. Also involved in tRNA surveillance by mediating tandem CCA addition to generate a CCACCA at the 3' terminus of unstable tRNAs. While stable tRNAs receive only 3'-terminal CCA, unstable tRNAs are marked with CCACCA and rapidly degraded. In Xanthomonas campestris pv. campestris (strain B100), this protein is Multifunctional CCA protein.